The chain runs to 332 residues: uncharacterized protein (332 aa).

The protein belongs to the peptidase U32 family.

This is an uncharacterized protein from Methanocaldococcus jannaschii (strain ATCC 43067 / DSM 2661 / JAL-1 / JCM 10045 / NBRC 100440) (Methanococcus jannaschii).